We begin with the raw amino-acid sequence, 64 residues long: Palmitoyl-CoA hydrolase (64 aa).

It belongs to the type-B carboxylesterase/lipase family. Monomer and homotrimer.

It is found in the microsome. The protein localises to the endoplasmic reticulum. The enzyme catalyses hexadecanoyl-CoA + H2O = hexadecanoate + CoA + H(+). Its function is as follows. Hydrolysis of a variety of CoA thioesters of long-chain fatty acids. The polypeptide is Palmitoyl-CoA hydrolase (Rattus norvegicus (Rat)).